The chain runs to 239 residues: Endonuclease V (239 aa).

Residues D50 and D118 each contribute to the Mg(2+) site.

It belongs to the endonuclease V family. The cofactor is Mg(2+).

The protein localises to the cytoplasm. The enzyme catalyses Endonucleolytic cleavage at apurinic or apyrimidinic sites to products with a 5'-phosphate.. In terms of biological role, DNA repair enzyme involved in the repair of deaminated bases. Selectively cleaves double-stranded DNA at the second phosphodiester bond 3' to a deoxyinosine leaving behind the intact lesion on the nicked DNA. In Xylella fastidiosa (strain Temecula1 / ATCC 700964), this protein is Endonuclease V.